We begin with the raw amino-acid sequence, 497 residues long: Apolipoprotein N-acyltransferase (497 aa).

6 helical membrane-spanning segments follow: residues 21 to 41, 51 to 71, 85 to 105, 119 to 139, 157 to 177, and 189 to 209; these read FAPFYLYPIPVVTLALLALLW, ALTGFTFGMGLFGAGVTWLYV, VLALIILCAYLALFPALTGWI, GMVAALWALAEWLRGTLFTGF, FAPVIGVYGLSLLLMLSAAWL, and FWLGLGSVWLIGFGLQQIHWT. Residues 221–461 enclose the CN hydrolase domain; the sequence is LQGNIPQNMK…GLHSTAQGFG (241 aa). The active-site Proton acceptor is E259. The active site involves K319. The Nucleophile role is filled by C371. The helical transmembrane segment at 472-492 threads the bilayer; that stretch reads SLVFALIGLLLLAGSLAAFSG.

Belongs to the CN hydrolase family. Apolipoprotein N-acyltransferase subfamily.

It localises to the cell inner membrane. It catalyses the reaction N-terminal S-1,2-diacyl-sn-glyceryl-L-cysteinyl-[lipoprotein] + a glycerophospholipid = N-acyl-S-1,2-diacyl-sn-glyceryl-L-cysteinyl-[lipoprotein] + a 2-acyl-sn-glycero-3-phospholipid + H(+). The protein operates within protein modification; lipoprotein biosynthesis (N-acyl transfer). Catalyzes the phospholipid dependent N-acylation of the N-terminal cysteine of apolipoprotein, the last step in lipoprotein maturation. The sequence is that of Apolipoprotein N-acyltransferase from Nitrosomonas europaea (strain ATCC 19718 / CIP 103999 / KCTC 2705 / NBRC 14298).